The chain runs to 446 residues: Solute carrier family 52, riboflavin transporter, member 2 (446 aa).

Transmembrane regions (helical) follow at residues 14-34 (LLVA…WVEL), 47-67 (LPSY…VVTL), 79-99 (APIQ…APLW), and 104-124 (VMAG…LALA). Asparagine 129 carries N-linked (GlcNAc...) asparagine glycosylation. The next 2 helical transmembrane spans lie at 147–167 (FFLG…GQGV) and 196–216 (FFGA…GLLL). A disordered region spans residues 228–267 (GSGTGLRGGAPGVEEEEEEEASPLQEPPSQAAGNTPSPDP). Gly residues predominate over residues 229–238 (SGTGLRGGAP). Residues 254–263 (PPSQAAGNTP) show a composition bias toward polar residues. The next 5 membrane-spanning stretches (helical) occupy residues 278 to 298 (ACLL…LPAV), 313 to 333 (LAVV…MGIL), 340 to 360 (LGGL…LAIL), 367 to 387 (VGTS…LGVF), and 405 to 425 (ALLA…VTMF).

Belongs to the riboflavin transporter family.

Its subcellular location is the cell membrane. The enzyme catalyses riboflavin(in) = riboflavin(out). Riboflavin transport is Na(+)-independent but moderately pH-sensitive. Activity is strongly inhibited by riboflavin analogs, such as lumiflavin. Weakly inhibited by flavin adenine dinucleotide (FAD) and flavin mononucleotide (FMN). Its function is as follows. Plasma membrane transporter mediating the uptake by cells of the water soluble vitamin B2/riboflavin that plays a key role in biochemical oxidation-reduction reactions of the carbohydrate, lipid, and amino acid metabolism. May also act as a receptor for 4-hydroxybutyrate. In terms of biological role, (Microbial infection) In case of infection by porcine endogenous retrovirus (PERV-A), acts as a cell receptor to retroviral envelopes. The polypeptide is Solute carrier family 52, riboflavin transporter, member 2 (SLC52A2) (Sus scrofa (Pig)).